Here is a 382-residue protein sequence, read N- to C-terminus: D-galactonate dehydratase (382 aa).

Residue Asp183 participates in Mg(2+) binding. His185 functions as the Proton donor in the catalytic mechanism. Residues Glu209 and Glu235 each coordinate Mg(2+). His285 (proton acceptor) is an active-site residue.

It belongs to the mandelate racemase/muconate lactonizing enzyme family. GalD subfamily. Mg(2+) serves as cofactor.

It carries out the reaction D-galactonate = 2-dehydro-3-deoxy-D-galactonate + H2O. The protein operates within carbohydrate acid metabolism; D-galactonate degradation; D-glyceraldehyde 3-phosphate and pyruvate from D-galactonate: step 1/3. Catalyzes the dehydration of D-galactonate to 2-keto-3-deoxy-D-galactonate. This chain is D-galactonate dehydratase, found in Variovorax paradoxus (strain S110).